Consider the following 825-residue polypeptide: MDVSLCPAKCSFWRIFLLGSVWLDYVGSVLACPANCVCSKTEINCRRPDDGNLFPLLEGQDSGNSNGNASINITDISRNITSIHIENWRGLHTLNAVDMELYTGLQKLTIKNSGLRNIQPRAFAKNPHLRYINLSSNRLTTLSWQLFQTLSLRELRLEQNFFNCSCDIRWMQLWQEQGEARLDSQSLYCISADGSQLPLFRMNISQCDLPEISVSHVNLTVREGDNAVITCNGSGSPLPDVDWIVTGLQSINTHQTNLNWTNVHAINLTLVNVTSEDNGFTLTCIAENVVGMSNASVALTVYYPPRVVSLVEPEVRLEHCIEFVVRGNPTPTLHWLYNGQPLRESKIIHMDYYQEGEVSEGCLLFNKPTHYNNGNYTLIAKNALGTANQTINGHFLKEPFPESTDFFDFESDASPTPPITVTHKPEEDTFGVSIAVGLAAFACVLLVVLFIMINKYGRRSKFGMKGPVAVISGEEDSASPLHHINHGITTPSSLDAGPDTVVIGMTRIPVIENPQYFRQGHNCHKPDTYVQHIKRRDIVLKRELGEGAFGKVFLAECYNLSPTKDKMLVAVKALKDPTLAARKDFQREAELLTNLQHEHIVKFYGVCGDGDPLIMVFEYMKHGDLNKFLRAHGPDAMILVDGQPRQAKGELGLSQMLHIASQIASGMVYLASQHFVHRDLATRNCLVGANLLVKIGDFGMSRDVYSTDYYRVGGHTMLPIRWMPPESIMYRKFTTESDVWSFGVILWEIFTYGKQPWFQLSNTEVIECITQGRVLERPRVCPKEVYDVMLGCWQREPQQRLNIKEIYKILHALGKATPIYLDILG.

The first 31 residues, 1-31, serve as a signal peptide directing secretion; the sequence is MDVSLCPAKCSFWRIFLLGSVWLDYVGSVLA. 2 cysteine pairs are disulfide-bonded: C32–C38 and C36–C45. Topologically, residues 32-429 are extracellular; the sequence is CPANCVCSKT…TVTHKPEEDT (398 aa). Residues N68, N72, and N79 are each glycosylated (N-linked (GlcNAc...) asparagine). LRR repeat units lie at residues 104-125 and 128-149; these read GLQK…AFAK and HLRY…LFQT. N-linked (GlcNAc...) asparagine glycosylation is found at N133 and N163. An LRRCT domain is found at 160–209; sequence NFFNCSCDIRWMQLWQEQGEARLDSQSLYCISADGSQLPLFRMNISQCDL. 2 cysteine pairs are disulfide-bonded: C164-C189 and C166-C207. N-linked (GlcNAc...) asparagine glycans are attached at residues N203, N218, N232, N259, N267, N272, and N294. 2 Ig-like C2-type domains span residues 210 to 300 and 309 to 382; these read PEIS…VALT and SLVE…IAKN. C231 and C284 are oxidised to a cystine. Residues C320 and C362 are joined by a disulfide bond. N-linked (GlcNAc...) asparagine glycans are attached at residues N375 and N388. Residues 430 to 453 form a helical membrane-spanning segment; that stretch reads FGVSIAVGLAAFACVLLVVLFIMI. Residues 454–825 are Cytoplasmic-facing; the sequence is NKYGRRSKFG…ATPIYLDILG (372 aa). S493 bears the Phosphoserine mark. Y516 is subject to Phosphotyrosine. In terms of domain architecture, Protein kinase spans 538-825; it reads IVLKRELGEG…ATPIYLDILG (288 aa). ATP contacts are provided by residues 544-552 and K572; that span reads LGEGAFGKV. The active-site Proton acceptor is the D679. Y705, Y709, and Y710 each carry phosphotyrosine; by autocatalysis.

The protein belongs to the protein kinase superfamily. Tyr protein kinase family. Insulin receptor subfamily. As to quaternary structure, exists in a dynamic equilibrium between monomeric (low affinity) and dimeric (high affinity) structures. Binds SH2B2. Interacts with SQSTM1 and KIDINS220. Interacts with PTPRS. Interacts with MAPK8IP3/JIP3. Post-translationally, ligand-mediated auto-phosphorylation. In terms of tissue distribution, isoform 2 expression is restricted to specific areas in adult brain. Isoform 3 transcripts are readily detected early during embryogenesis and are expressed predominantly in adult brain and gonads.

It is found in the membrane. It catalyses the reaction L-tyrosyl-[protein] + ATP = O-phospho-L-tyrosyl-[protein] + ADP + H(+). Its function is as follows. Receptor tyrosine kinase involved in nervous system and probably heart development. Upon binding of its ligand NTF3/neurotrophin-3, NTRK3 autophosphorylates and activates different signaling pathways, including the phosphatidylinositol 3-kinase/AKT and the MAPK pathways, that control cell survival and differentiation. The polypeptide is NT-3 growth factor receptor (Ntrk3) (Mus musculus (Mouse)).